The sequence spans 974 residues: Bifunctional glutamine synthetase adenylyltransferase/adenylyl-removing enzyme (974 aa).

The interval 1 to 464 is adenylyl removase; the sequence is MKNAFLKTHL…HYAALFENEQ (464 aa). Positions 468-974 are adenylyl transferase; it reads LEIGNLVFTG…CSIFKQIMKH (507 aa).

The protein belongs to the GlnE family. Mg(2+) is required as a cofactor.

It catalyses the reaction [glutamine synthetase]-O(4)-(5'-adenylyl)-L-tyrosine + phosphate = [glutamine synthetase]-L-tyrosine + ADP. The enzyme catalyses [glutamine synthetase]-L-tyrosine + ATP = [glutamine synthetase]-O(4)-(5'-adenylyl)-L-tyrosine + diphosphate. Involved in the regulation of glutamine synthetase GlnA, a key enzyme in the process to assimilate ammonia. When cellular nitrogen levels are high, the C-terminal adenylyl transferase (AT) inactivates GlnA by covalent transfer of an adenylyl group from ATP to specific tyrosine residue of GlnA, thus reducing its activity. Conversely, when nitrogen levels are low, the N-terminal adenylyl removase (AR) activates GlnA by removing the adenylyl group by phosphorolysis, increasing its activity. The regulatory region of GlnE binds the signal transduction protein PII (GlnB) which indicates the nitrogen status of the cell. The chain is Bifunctional glutamine synthetase adenylyltransferase/adenylyl-removing enzyme from Bartonella quintana (strain Toulouse) (Rochalimaea quintana).